We begin with the raw amino-acid sequence, 91 residues long: MTRMVQCTKLGKEAEGLDFPPLPGELGKRIYESISKEAWQQWLKQQTMLINENRLNMADPRARQYLMKQTEKFFFGEGADQASGYVPPAQG.

Belongs to the Fe(2+)-trafficking protein family.

Could be a mediator in iron transactions between iron acquisition and iron-requiring processes, such as synthesis and/or repair of Fe-S clusters in biosynthetic enzymes. In Paraburkholderia phymatum (strain DSM 17167 / CIP 108236 / LMG 21445 / STM815) (Burkholderia phymatum), this protein is Probable Fe(2+)-trafficking protein.